A 282-amino-acid chain; its full sequence is Uracil-DNA glycosylase (282 aa).

Positions 15–40 (SAASKRKSASNTENIPEKVPAGNENQ) are disordered. Residue Asp123 is the Proton acceptor of the active site.

Belongs to the uracil-DNA glycosylase (UDG) superfamily. UNG family.

It localises to the mitochondrion. The protein resides in the nucleus. The catalysed reaction is Hydrolyzes single-stranded DNA or mismatched double-stranded DNA and polynucleotides, releasing free uracil.. Inhibited by UGI, a B.subtilis bacteriophage PBS2 peptide inhibitor. In terms of biological role, excises uracil residues from the DNA which can arise as a result of misincorporation of dUMP residues by DNA polymerase or due to deamination of cytosine. In Caenorhabditis elegans, this protein is Uracil-DNA glycosylase.